A 186-amino-acid chain; its full sequence is Peptidyl-tRNA hydrolase (186 aa).

Tyrosine 14 contacts tRNA. Histidine 19 acts as the Proton acceptor in catalysis. Residues tyrosine 64, asparagine 66, and asparagine 113 each contribute to the tRNA site.

Belongs to the PTH family. In terms of assembly, monomer.

The protein localises to the cytoplasm. It catalyses the reaction an N-acyl-L-alpha-aminoacyl-tRNA + H2O = an N-acyl-L-amino acid + a tRNA + H(+). Hydrolyzes ribosome-free peptidyl-tRNAs (with 1 or more amino acids incorporated), which drop off the ribosome during protein synthesis, or as a result of ribosome stalling. In terms of biological role, catalyzes the release of premature peptidyl moieties from peptidyl-tRNA molecules trapped in stalled 50S ribosomal subunits, and thus maintains levels of free tRNAs and 50S ribosomes. This chain is Peptidyl-tRNA hydrolase, found in Agathobacter rectalis (strain ATCC 33656 / DSM 3377 / JCM 17463 / KCTC 5835 / VPI 0990) (Eubacterium rectale).